The sequence spans 30 residues: GKITFYEDRNFQGRCYECSTDCPDLSPYFS.

Residues 1–30 form the Beta/gamma crystallin 'Greek key' domain; sequence GKITFYEDRNFQGRCYECSTDCPDLSPYFS.

This sequence belongs to the beta/gamma-crystallin family. As to quaternary structure, monomer.

Crystallins are the dominant structural components of the vertebrate eye lens. The protein is Gamma-II crystallin of Rhizoprionodon acutus (Milk shark).